Reading from the N-terminus, the 934-residue chain is Protein translocase subunit SecA (934 aa).

ATP is bound by residues Gln90, 108–112 (GEGKT), and Asp509. Residues 535–565 (PEEDHTPPVPLQRSAPGGFSDAAAPSLPRSG) are disordered.

Belongs to the SecA family. In terms of assembly, monomer and homodimer. Part of the essential Sec protein translocation apparatus which comprises SecA, SecYEG and auxiliary proteins SecDF. Other proteins may also be involved.

The protein resides in the cell inner membrane. Its subcellular location is the cellular thylakoid membrane. It is found in the cytoplasm. It carries out the reaction ATP + H2O + cellular proteinSide 1 = ADP + phosphate + cellular proteinSide 2.. Functionally, part of the Sec protein translocase complex. Interacts with the SecYEG preprotein conducting channel. Has a central role in coupling the hydrolysis of ATP to the transfer of proteins into and across the cell membrane, serving as an ATP-driven molecular motor driving the stepwise translocation of polypeptide chains across the membrane. Probably participates in protein translocation into and across both the cytoplasmic and thylakoid membranes in cyanobacterial cells. The protein is Protein translocase subunit SecA of Synechococcus sp. (strain CC9605).